A 453-amino-acid polypeptide reads, in one-letter code: Probable 1,4-beta-D-glucan cellobiohydrolase A (453 aa).

The first 17 residues, 1 to 17 (MYQRALLFSALATAVSA), serve as a signal peptide directing secretion. The Nucleophile role is filled by Glu-226. Glu-231 (proton donor) is an active-site residue. Residue Asn-284 is glycosylated (N-linked (GlcNAc...) asparagine).

It belongs to the glycosyl hydrolase 7 (cellulase C) family.

Its subcellular location is the secreted. The catalysed reaction is Hydrolysis of (1-&gt;4)-beta-D-glucosidic linkages in cellulose and cellotetraose, releasing cellobiose from the non-reducing ends of the chains.. The biological conversion of cellulose to glucose generally requires three types of hydrolytic enzymes: (1) Endoglucanases which cut internal beta-1,4-glucosidic bonds; (2) Exocellobiohydrolases that cut the disaccharide cellobiose from the non-reducing end of the cellulose polymer chain; (3) Beta-1,4-glucosidases which hydrolyze the cellobiose and other short cello-oligosaccharides to glucose. The protein is Probable 1,4-beta-D-glucan cellobiohydrolase A (cbhA) of Aspergillus clavatus (strain ATCC 1007 / CBS 513.65 / DSM 816 / NCTC 3887 / NRRL 1 / QM 1276 / 107).